We begin with the raw amino-acid sequence, 381 residues long: Homoserine O-succinyltransferase (381 aa).

The AB hydrolase-1 domain maps to 53 to 361 (ILICHALSGS…DSVHGHDAFL (309 aa)). Serine 157 functions as the Nucleophile in the catalytic mechanism. Arginine 227 contributes to the substrate binding site. Catalysis depends on residues aspartate 324 and histidine 357. Aspartate 358 is a substrate binding site.

It belongs to the AB hydrolase superfamily. MetX family. As to quaternary structure, homodimer.

It localises to the cytoplasm. It carries out the reaction L-homoserine + succinyl-CoA = O-succinyl-L-homoserine + CoA. It participates in amino-acid biosynthesis; L-methionine biosynthesis via de novo pathway; O-succinyl-L-homoserine from L-homoserine: step 1/1. In terms of biological role, transfers a succinyl group from succinyl-CoA to L-homoserine, forming succinyl-L-homoserine. This chain is Homoserine O-succinyltransferase, found in Saccharophagus degradans (strain 2-40 / ATCC 43961 / DSM 17024).